The following is a 134-amino-acid chain: MLWQAYVDDHLMCDIEGHEGHRLTAAAIVGHDGSVWAQSATFPQFKPEEMNGIMTDFNEPGHLAPTGLHLGGTKYMVIQGEAGAVIRGKKGSGGITIKETGQALVCGIYKEPVTPGQCNMVVERLGDYLLEQGL.

Cysteines 13 and 118 form a disulfide. The short motif at 84 to 100 (AVIRGKKGSGGITIKET) is the Involved in PIP2 interaction element. T114 is modified (phosphothreonine).

The protein belongs to the profilin family. In terms of assembly, occurs in many kinds of cells as a complex with monomeric actin in a 1:1 ratio. Phosphorylated by MAP kinases.

It is found in the cytoplasm. Its subcellular location is the cytoskeleton. Binds to actin and affects the structure of the cytoskeleton. At high concentrations, profilin prevents the polymerization of actin, whereas it enhances it at low concentrations. This chain is Profilin-2, found in Olea europaea (Common olive).